The sequence spans 153 residues: Insulin-like growth factor 1 (153 aa).

Residues 49–77 are b; it reads GPETLCGAELVDALQFVCGDRGFYFNKPT. 3 disulfide bridges follow: Cys-54-Cys-96, Cys-66-Cys-109, and Cys-95-Cys-100. Positions 78–89 are c; it reads GYGSSSRRAPQT. An a region spans residues 90-110; the sequence is GIVDECCFRSCDLRRLEMYCA. The d stretch occupies residues 111-118; sequence PLKPAKSA. A propeptide spans 119-153 (e peptide); the sequence is RSVRAQRHTDMPKAQKEVHLKNASRGSAGNKNYRM. The interval 120 to 153 is disordered; sequence SVRAQRHTDMPKAQKEVHLKNASRGSAGNKNYRM. Residues 125–138 are compositionally biased toward basic and acidic residues; that stretch reads RHTDMPKAQKEVHL. Polar residues predominate over residues 142-153; the sequence is SRGSAGNKNYRM.

It belongs to the insulin family. In terms of assembly, forms a ternary complex with IGFR1 and ITGAV:ITGB3. Forms a ternary complex with IGFR1 and ITGA6:ITGB4. Forms a ternary complex with IGFBP3 and ALS.

The protein resides in the secreted. Its function is as follows. The insulin-like growth factors, isolated from plasma, are structurally and functionally related to insulin but have a much higher growth-promoting activity. May be a physiological regulator of [1-14C]-2-deoxy-D-glucose (2DG) transport and glycogen synthesis in osteoblasts. Stimulates glucose transport in bone-derived osteoblastic (PyMS) cells and is effective at much lower concentrations than insulin, not only regarding glycogen and DNA synthesis but also with regard to enhancing glucose uptake. May play a role in synapse maturation. Ca(2+)-dependent exocytosis of IGF1 is required for sensory perception of smell in the olfactory bulb. Acts as a ligand for IGF1R. Binds to the alpha subunit of IGF1R, leading to the activation of the intrinsic tyrosine kinase activity which autophosphorylates tyrosine residues in the beta subunit thus initiating a cascade of down-stream signaling events leading to activation of the PI3K-AKT/PKB and the Ras-MAPK pathways. Binds to integrins ITGAV:ITGB3 and ITGA6:ITGB4. Its binding to integrins and subsequent ternary complex formation with integrins and IGFR1 are essential for IGF1 signaling. Induces the phosphorylation and activation of IGFR1, MAPK3/ERK1, MAPK1/ERK2 and AKT1. As part of the MAPK/ERK signaling pathway, acts as a negative regulator of apoptosis in cardiomyocytes via promotion of STUB1/CHIP-mediated ubiquitination and degradation of ICER-type isoforms of CREM. The chain is Insulin-like growth factor 1 from Ailuropoda melanoleuca (Giant panda).